The following is a 343-amino-acid chain: L-idonate 5-dehydrogenase (NAD(P)(+)) (343 aa).

Cysteine 40, histidine 65, cysteine 93, cysteine 96, cysteine 99, cysteine 107, and glutamate 153 together coordinate Zn(2+).

This sequence belongs to the zinc-containing alcohol dehydrogenase family. It depends on Zn(2+) as a cofactor.

It catalyses the reaction L-idonate + NADP(+) = 5-dehydro-D-gluconate + NADPH + H(+). The catalysed reaction is L-idonate + NAD(+) = 5-dehydro-D-gluconate + NADH + H(+). Its pathway is carbohydrate acid metabolism; L-idonate degradation. Catalyzes the NADH/NADPH-dependent oxidation of L-idonate to 5-ketogluconate (5KG). The polypeptide is L-idonate 5-dehydrogenase (NAD(P)(+)) (idnD) (Escherichia coli (strain K12)).